Here is a 478-residue protein sequence, read N- to C-terminus: PRAME family member 11 (478 aa).

An LRR 1; degenerate repeat occupies 99 to 126 (RWKLQVLDLQDVCENFWMVWSEAMAHGC). One copy of the LRR 2; degenerate repeat lies at 181–205 (HLCCKKLKILGMPFRNIRSILKMVN). The stretch at 206–232 (LDCIQEVEVNCKWILPILTQFTPYLGH) is one LRR 3; degenerate repeat. The LRR 4; degenerate repeat unit spans residues 233–268 (LRNLQKLVLSHMDVSRYVSPEQKKEIVTQFTTQFLK). 5 LRR repeats span residues 269–294 (LRCL…LSCL), 295–326 (KTSL…SQLK), 327–347 (TLDL…QILL), 351–378 (AATL…ALSR), and 379–403 (CFEL…LLSH).

This sequence belongs to the PRAME family.

The polypeptide is PRAME family member 11 (Homo sapiens (Human)).